The chain runs to 64 residues: Large ribosomal subunit protein bL35 (64 aa).

This sequence belongs to the bacterial ribosomal protein bL35 family.

The sequence is that of Large ribosomal subunit protein bL35 from Acidothermus cellulolyticus (strain ATCC 43068 / DSM 8971 / 11B).